The sequence spans 147 residues: Ribonuclease 4 (147 aa).

A signal peptide spans 1–28 (MALQRTQAFLLLLLLTLLGLGLVQPSYG). Q29 carries the post-translational modification Pyrrolidone carboxylic acid. R35, H40, K68, N71, and T72 together coordinate dUMP. Residue H40 is the Proton acceptor of the active site. 4 cysteine pairs are disulfide-bonded: C53–C109, C67–C120, C85–C135, and C92–C99. H144 serves as the catalytic Proton donor. F145 lines the dUMP pocket.

It belongs to the pancreatic ribonuclease family.

It localises to the secreted. In terms of biological role, cleaves preferentially after uridine bases. Has antimicrobial activity against uropathogenic E.coli (UPEC). Probably contributes to urinary tract sterility. The protein is Ribonuclease 4 (RNASE4) of Bos taurus (Bovine).